Consider the following 350-residue polypeptide: MRVAINGFGRIGRLVLQAMAEQKLLGKEFDVAAVVDLSTDARYFAYQLKYDSVQGKMGSSLSAPAEDILEVGGHRIKCVCGRGLKPSQLPWKDLGIEVVIEATGIYANESSYGHLEAGAKRVIISAPAKSSDASKPVKTIVMGVNEHEFDPAEHKVVSNASCTTNCLAPVVHVFLKEGVGIETGLMTTIHSYTATQKTVDGVSLKDWRGGRAAAVNIIPSTTGAAKAVGEVLPSTRGKLTGMAFRVPTPTGSVVDLTFRTEKETSVADLNAMLKKASESYLRGVLQYCDEDIVSADVIHNQYSSIYDSRATLQNNLPNEKRFFKVVSWYDNEWGYSNRVVDLLKFISQKR.

NAD(+) is bound by residues 10-11 (RI), D36, R82, and S125. Residues 161-163 (SCT), T193, 222-223 (TG), and R245 each bind D-glyceraldehyde 3-phosphate. The active-site Nucleophile is C162. N331 serves as a coordination point for NAD(+).

Belongs to the glyceraldehyde-3-phosphate dehydrogenase family. Homotetramer.

The protein resides in the cytoplasm. The enzyme catalyses D-glyceraldehyde 3-phosphate + phosphate + NAD(+) = (2R)-3-phospho-glyceroyl phosphate + NADH + H(+). It functions in the pathway carbohydrate degradation; glycolysis; pyruvate from D-glyceraldehyde 3-phosphate: step 1/5. Its function is as follows. Catalyzes the oxidative phosphorylation of glyceraldehyde 3-phosphate (G3P) to 1,3-bisphosphoglycerate (BPG) using the cofactor NAD. The first reaction step involves the formation of a hemiacetal intermediate between G3P and a cysteine residue, and this hemiacetal intermediate is then oxidized to a thioester, with concomitant reduction of NAD to NADH. The reduced NADH is then exchanged with the second NAD, and the thioester is attacked by a nucleophilic inorganic phosphate to produce BPG. The sequence is that of Glyceraldehyde-3-phosphate dehydrogenase (gap) from Treponema pallidum (strain Nichols).